The sequence spans 71 residues: Small ribosomal subunit protein bS21 (71 aa).

Basic residues predominate over residues 50 to 59; sequence AAAVKRHAKK. Residues 50–71 are disordered; the sequence is AAAVKRHAKKVQREQRRAVRLY. The segment covering 60–71 has biased composition (basic and acidic residues); the sequence is VQREQRRAVRLY.

The protein belongs to the bacterial ribosomal protein bS21 family.

This Pseudomonas fluorescens (strain ATCC BAA-477 / NRRL B-23932 / Pf-5) protein is Small ribosomal subunit protein bS21.